The chain runs to 604 residues: MPSSSTDVDAIRNFCIIAHIDHGKSTLADRLLEVTGTLQHNQMTAQVLDDMDLERERGITIKSHAIQMHHKAGDGRAYILNLIDTPGHVDFSYEVSRSLAACEGALLVVDATQGVEAQTIANLYLAVEAGLEIIPVINKIDLPSADVEGVAQQIIDLIGVDREEIVEVSAKAGIGIDSLLDAVISRVPAPADHRSMPLRALIFDSVFDAYRGAVVYLRIVDGVLRKGDRVRFFANDKIFVADEIGTMGLKRQPNTVLEAGNVGYLICSIKDVKDAKVGDTVTLADNSAKERLSGYKDVKPMVFSGLYPVDSDEFEDLRESLEKLSLNDASLVYTPETSAALGFGFRCGFLGLLHMEIIQERLEREYKVNIITTVPNVEYRVLRTNGETILVDNPSKMPEAGLISEVEEPYVRIQIITMADYIGNVMKLSMERRGEYKNTDYLDTLRVNLHFEFPLAEIVFDFHDKLKSVSKGYASMDYEYIGYRRSDLVKLDVLLNGEPVDALSTVVHRSKAYEWGRKLCQKLKTIIPKQMYEVAIQAAIGSRVISRETISAIRKNVLAKCYGGDISRKRKLLEKQKEGKKRMKQVGRVEVPQEAFLAVLNIDE.

The tr-type G domain occupies D9 to A191. GTP-binding positions include D21 to T26 and N138 to D141.

This sequence belongs to the TRAFAC class translation factor GTPase superfamily. Classic translation factor GTPase family. LepA subfamily.

The protein resides in the cell inner membrane. The enzyme catalyses GTP + H2O = GDP + phosphate + H(+). In terms of biological role, required for accurate and efficient protein synthesis under certain stress conditions. May act as a fidelity factor of the translation reaction, by catalyzing a one-codon backward translocation of tRNAs on improperly translocated ribosomes. Back-translocation proceeds from a post-translocation (POST) complex to a pre-translocation (PRE) complex, thus giving elongation factor G a second chance to translocate the tRNAs correctly. Binds to ribosomes in a GTP-dependent manner. This is Elongation factor 4 from Prosthecochloris aestuarii (strain DSM 271 / SK 413).